Here is a 461-residue protein sequence, read N- to C-terminus: Bifunctional protein HldE (461 aa).

A ribokinase region spans residues 1–312; that stretch reads MLEFLSQQKP…IKSFNRVDFE (312 aa). ATP is bound at residue 191 to 194; it reads NKKE. Aspartate 259 is a catalytic residue. Residues 334–461 are cytidylyltransferase; the sequence is FTNGCFDIVH…KIIEKIKDKK (128 aa).

It in the N-terminal section; belongs to the carbohydrate kinase PfkB family. The protein in the C-terminal section; belongs to the cytidylyltransferase family. In terms of assembly, homodimer.

It carries out the reaction D-glycero-beta-D-manno-heptose 7-phosphate + ATP = D-glycero-beta-D-manno-heptose 1,7-bisphosphate + ADP + H(+). The catalysed reaction is D-glycero-beta-D-manno-heptose 1-phosphate + ATP + H(+) = ADP-D-glycero-beta-D-manno-heptose + diphosphate. The protein operates within nucleotide-sugar biosynthesis; ADP-L-glycero-beta-D-manno-heptose biosynthesis; ADP-L-glycero-beta-D-manno-heptose from D-glycero-beta-D-manno-heptose 7-phosphate: step 1/4. Its pathway is nucleotide-sugar biosynthesis; ADP-L-glycero-beta-D-manno-heptose biosynthesis; ADP-L-glycero-beta-D-manno-heptose from D-glycero-beta-D-manno-heptose 7-phosphate: step 3/4. In terms of biological role, catalyzes the phosphorylation of D-glycero-D-manno-heptose 7-phosphate at the C-1 position to selectively form D-glycero-beta-D-manno-heptose-1,7-bisphosphate. Its function is as follows. Catalyzes the ADP transfer from ATP to D-glycero-beta-D-manno-heptose 1-phosphate, yielding ADP-D-glycero-beta-D-manno-heptose. The protein is Bifunctional protein HldE of Campylobacter jejuni subsp. doylei (strain ATCC BAA-1458 / RM4099 / 269.97).